Here is a 444-residue protein sequence, read N- to C-terminus: tRNA-2-methylthio-N(6)-dimethylallyladenosine synthase (444 aa).

The 118-residue stretch at 2-119 (KKLYIRTFGC…LPSMLNEVLT (118 aa)) folds into the MTTase N-terminal domain. The [4Fe-4S] cluster site is built by C11, C48, C82, C161, C165, and C168. Residues 147-379 (KTSSVTAFVS…QKTIDKNTER (233 aa)) form the Radical SAM core domain. The 63-residue stretch at 382 to 444 (KSMVGSVQKI…GNSLVGNLIA (63 aa)) folds into the TRAM domain.

This sequence belongs to the methylthiotransferase family. MiaB subfamily. As to quaternary structure, monomer. Requires [4Fe-4S] cluster as cofactor.

The protein localises to the cytoplasm. It catalyses the reaction N(6)-dimethylallyladenosine(37) in tRNA + (sulfur carrier)-SH + AH2 + 2 S-adenosyl-L-methionine = 2-methylsulfanyl-N(6)-dimethylallyladenosine(37) in tRNA + (sulfur carrier)-H + 5'-deoxyadenosine + L-methionine + A + S-adenosyl-L-homocysteine + 2 H(+). Catalyzes the methylthiolation of N6-(dimethylallyl)adenosine (i(6)A), leading to the formation of 2-methylthio-N6-(dimethylallyl)adenosine (ms(2)i(6)A) at position 37 in tRNAs that read codons beginning with uridine. This is tRNA-2-methylthio-N(6)-dimethylallyladenosine synthase from Ruthia magnifica subsp. Calyptogena magnifica.